The sequence spans 99 residues: Transmembrane protein 14A (99 aa).

The next 3 helical transmembrane spans lie at 1–21 (MDLI…LGYK), 24–44 (GGVP…YGAY), and 79–99 (PAGL…LLLL).

Belongs to the TMEM14 family.

Its subcellular location is the mitochondrion membrane. It is found in the endoplasmic reticulum membrane. Inhibits apoptosis via negative regulation of the mitochondrial outer membrane permeabilization involved in apoptotic signaling pathway. The sequence is that of Transmembrane protein 14A (TMEM14A) from Sus scrofa (Pig).